Consider the following 184-residue polypeptide: Crossover junction endodeoxyribonuclease RuvC (184 aa).

Active-site residues include Asp7, Glu68, and Asp141. The Mg(2+) site is built by Asp7, Glu68, and Asp141.

This sequence belongs to the RuvC family. In terms of assembly, homodimer which binds Holliday junction (HJ) DNA. The HJ becomes 2-fold symmetrical on binding to RuvC with unstacked arms; it has a different conformation from HJ DNA in complex with RuvA. In the full resolvosome a probable DNA-RuvA(4)-RuvB(12)-RuvC(2) complex forms which resolves the HJ. The cofactor is Mg(2+).

Its subcellular location is the cytoplasm. The enzyme catalyses Endonucleolytic cleavage at a junction such as a reciprocal single-stranded crossover between two homologous DNA duplexes (Holliday junction).. Functionally, the RuvA-RuvB-RuvC complex processes Holliday junction (HJ) DNA during genetic recombination and DNA repair. Endonuclease that resolves HJ intermediates. Cleaves cruciform DNA by making single-stranded nicks across the HJ at symmetrical positions within the homologous arms, yielding a 5'-phosphate and a 3'-hydroxyl group; requires a central core of homology in the junction. The consensus cleavage sequence is 5'-(A/T)TT(C/G)-3'. Cleavage occurs on the 3'-side of the TT dinucleotide at the point of strand exchange. HJ branch migration catalyzed by RuvA-RuvB allows RuvC to scan DNA until it finds its consensus sequence, where it cleaves and resolves the cruciform DNA. This chain is Crossover junction endodeoxyribonuclease RuvC, found in Mycobacterium ulcerans (strain Agy99).